Here is a 339-residue protein sequence, read N- to C-terminus: Aspartate carbamoyltransferase catalytic subunit (339 aa).

R59 and T60 together coordinate carbamoyl phosphate. K87 serves as a coordination point for L-aspartate. Residues R109, H142, and Q145 each coordinate carbamoyl phosphate. L-aspartate contacts are provided by R182 and R253. Carbamoyl phosphate is bound by residues G294 and P295.

The protein belongs to the aspartate/ornithine carbamoyltransferase superfamily. ATCase family. As to quaternary structure, heterododecamer (2C3:3R2) of six catalytic PyrB chains organized as two trimers (C3), and six regulatory PyrI chains organized as three dimers (R2).

It carries out the reaction carbamoyl phosphate + L-aspartate = N-carbamoyl-L-aspartate + phosphate + H(+). It participates in pyrimidine metabolism; UMP biosynthesis via de novo pathway; (S)-dihydroorotate from bicarbonate: step 2/3. Catalyzes the condensation of carbamoyl phosphate and aspartate to form carbamoyl aspartate and inorganic phosphate, the committed step in the de novo pyrimidine nucleotide biosynthesis pathway. The polypeptide is Aspartate carbamoyltransferase catalytic subunit (Prochlorococcus marinus (strain NATL2A)).